Here is a 233-residue protein sequence, read N- to C-terminus: Orotidine 5'-phosphate decarboxylase (233 aa).

Residues aspartate 10, lysine 32, aspartate 59–threonine 68, threonine 119, arginine 180, glutamine 189, glycine 209, and arginine 210 contribute to the substrate site. The Proton donor role is filled by lysine 61.

It belongs to the OMP decarboxylase family. Type 1 subfamily. As to quaternary structure, homodimer.

The catalysed reaction is orotidine 5'-phosphate + H(+) = UMP + CO2. Its pathway is pyrimidine metabolism; UMP biosynthesis via de novo pathway; UMP from orotate: step 2/2. Catalyzes the decarboxylation of orotidine 5'-monophosphate (OMP) to uridine 5'-monophosphate (UMP). The chain is Orotidine 5'-phosphate decarboxylase from Pasteurella multocida (strain Pm70).